We begin with the raw amino-acid sequence, 88 residues long: uncharacterized protein (88 aa).

This is an uncharacterized protein from Sinorhizobium fredii (strain NBRC 101917 / NGR234).